The chain runs to 668 residues: DNA ligase (668 aa).

NAD(+) contacts are provided by residues 34–38 (DAEYD), 83–84 (SL), and glutamate 113. Residue lysine 115 is the N6-AMP-lysine intermediate of the active site. The NAD(+) site is built by arginine 136, glutamate 170, lysine 286, and lysine 310. Zn(2+)-binding residues include cysteine 404, cysteine 407, cysteine 422, and cysteine 427. One can recognise a BRCT domain in the interval 590–668 (ESDSYFAGKT…EVKMLEELKK (79 aa)).

The protein belongs to the NAD-dependent DNA ligase family. LigA subfamily. Requires Mg(2+) as cofactor. The cofactor is Mn(2+).

The enzyme catalyses NAD(+) + (deoxyribonucleotide)n-3'-hydroxyl + 5'-phospho-(deoxyribonucleotide)m = (deoxyribonucleotide)n+m + AMP + beta-nicotinamide D-nucleotide.. Functionally, DNA ligase that catalyzes the formation of phosphodiester linkages between 5'-phosphoryl and 3'-hydroxyl groups in double-stranded DNA using NAD as a coenzyme and as the energy source for the reaction. It is essential for DNA replication and repair of damaged DNA. The chain is DNA ligase from Bacillus pumilus (strain SAFR-032).